Reading from the N-terminus, the 665-residue chain is UvrABC system protein C (665 aa).

In terms of domain architecture, GIY-YIG spans 16 to 95 (ESPGVYRFRD…IKQYDPRFNV (80 aa)). A UVR domain is found at 208 to 243 (DLMVRRLEREMADASAELEFERAARLRDDLAALRRA). The interval 470–507 (EAGVESAGDPATPAGPASTGPGVPDEPRVGTLVDPTTG) is disordered. A compositionally biased stretch (low complexity) spans 475 to 491 (SAGDPATPAGPASTGPG).

It belongs to the UvrC family. As to quaternary structure, interacts with UvrB in an incision complex.

The protein localises to the cytoplasm. The UvrABC repair system catalyzes the recognition and processing of DNA lesions. UvrC both incises the 5' and 3' sides of the lesion. The N-terminal half is responsible for the 3' incision and the C-terminal half is responsible for the 5' incision. In Salinispora tropica (strain ATCC BAA-916 / DSM 44818 / JCM 13857 / NBRC 105044 / CNB-440), this protein is UvrABC system protein C.